We begin with the raw amino-acid sequence, 576 residues long: DNA mismatch repair protein MutL (576 aa).

It belongs to the DNA mismatch repair MutL/HexB family.

Functionally, this protein is involved in the repair of mismatches in DNA. It is required for dam-dependent methyl-directed DNA mismatch repair. May act as a 'molecular matchmaker', a protein that promotes the formation of a stable complex between two or more DNA-binding proteins in an ATP-dependent manner without itself being part of a final effector complex. The polypeptide is DNA mismatch repair protein MutL (Chlamydia trachomatis serovar L2 (strain ATCC VR-902B / DSM 19102 / 434/Bu)).